The chain runs to 88 residues: Small ribosomal subunit protein bS20 (88 aa).

The protein belongs to the bacterial ribosomal protein bS20 family.

Functionally, binds directly to 16S ribosomal RNA. This is Small ribosomal subunit protein bS20 from Desulforudis audaxviator (strain MP104C).